The sequence spans 723 residues: Malate synthase G (723 aa).

Residues valine 118, arginine 125–tyrosine 126, serine 274, and arginine 311 contribute to the acetyl-CoA site. Arginine 338 acts as the Proton acceptor in catalysis. Glyoxylate-binding positions include arginine 338, glutamate 427, and glycine 452–aspartate 455. Residues glutamate 427 and aspartate 455 each contribute to the Mg(2+) site. Residue proline 536 coordinates acetyl-CoA. Cysteine 617 carries the cysteine sulfenic acid (-SOH) modification. Residue aspartate 631 is the Proton donor of the active site. Cysteine 688 is subject to Cysteine sulfenic acid (-SOH).

It belongs to the malate synthase family. GlcB subfamily. Monomer. Mg(2+) is required as a cofactor.

The protein localises to the cytoplasm. The catalysed reaction is glyoxylate + acetyl-CoA + H2O = (S)-malate + CoA + H(+). It participates in carbohydrate metabolism; glyoxylate cycle; (S)-malate from isocitrate: step 2/2. Functionally, involved in the glycolate utilization. Catalyzes the condensation and subsequent hydrolysis of acetyl-coenzyme A (acetyl-CoA) and glyoxylate to form malate and CoA. The sequence is that of Malate synthase G from Escherichia coli O6:H1 (strain CFT073 / ATCC 700928 / UPEC).